The primary structure comprises 439 residues: tRNA-2-methylthio-N(6)-dimethylallyladenosine synthase (439 aa).

The 118-residue stretch at 2–119 folds into the MTTase N-terminal domain; it reads KKLYLKTHGC…LPDLLDSVIQ (118 aa). Cysteine 11, cysteine 48, cysteine 82, cysteine 156, cysteine 160, and cysteine 163 together coordinate [4Fe-4S] cluster. The 233-residue stretch at 142–374 folds into the Radical SAM core domain; it reads RAEGPSAFVS…QNRINVKAAE (233 aa). The TRAM domain maps to 377–439; it reads QSMVGTQQRI…RPYSLWGEIC (63 aa).

Belongs to the methylthiotransferase family. MiaB subfamily. Monomer. [4Fe-4S] cluster serves as cofactor.

Its subcellular location is the cytoplasm. The catalysed reaction is N(6)-dimethylallyladenosine(37) in tRNA + (sulfur carrier)-SH + AH2 + 2 S-adenosyl-L-methionine = 2-methylsulfanyl-N(6)-dimethylallyladenosine(37) in tRNA + (sulfur carrier)-H + 5'-deoxyadenosine + L-methionine + A + S-adenosyl-L-homocysteine + 2 H(+). Functionally, catalyzes the methylthiolation of N6-(dimethylallyl)adenosine (i(6)A), leading to the formation of 2-methylthio-N6-(dimethylallyl)adenosine (ms(2)i(6)A) at position 37 in tRNAs that read codons beginning with uridine. This chain is tRNA-2-methylthio-N(6)-dimethylallyladenosine synthase, found in Coxiella burnetii (strain Dugway 5J108-111).